A 606-amino-acid polypeptide reads, in one-letter code: Isocitrate dehydrogenase kinase/phosphatase (606 aa).

ATP-binding positions include Ala-354–Thr-360 and Lys-375. Asp-414 is a catalytic residue.

Belongs to the AceK family.

It localises to the cytoplasm. It catalyses the reaction L-seryl-[isocitrate dehydrogenase] + ATP = O-phospho-L-seryl-[isocitrate dehydrogenase] + ADP + H(+). Bifunctional enzyme which can phosphorylate or dephosphorylate isocitrate dehydrogenase (IDH) on a specific serine residue. This is a regulatory mechanism which enables bacteria to bypass the Krebs cycle via the glyoxylate shunt in response to the source of carbon. When bacteria are grown on glucose, IDH is fully active and unphosphorylated, but when grown on acetate or ethanol, the activity of IDH declines drastically concomitant with its phosphorylation. The polypeptide is Isocitrate dehydrogenase kinase/phosphatase (Rhodopseudomonas palustris (strain BisB5)).